The primary structure comprises 396 residues: Putative protein IntB (396 aa).

Residues 71–151 (RTFKEVAIEW…RTTAIMRYAV (81 aa)) form the Core-binding (CB) domain. The region spanning 174–367 (QHRPALELKR…EHLEERRLML (194 aa)) is the Tyr recombinase domain. Catalysis depends on residues arginine 213, lysine 252, histidine 316, arginine 319, and histidine 343. The active-site O-(3'-phospho-DNA)-tyrosine intermediate is the tyrosine 353.

This sequence belongs to the 'phage' integrase family.

The polypeptide is Putative protein IntB (intB) (Escherichia coli (strain K12)).